The primary structure comprises 332 residues: Leucine carboxyl methyltransferase 1 (332 aa).

Residues 1–23 (MAASLRRPSFTTCSSPTDTDDEG) form a disordered region. S-adenosyl-L-methionine contacts are provided by residues arginine 71, glycine 96, aspartate 120, 169–170 (DL), and glutamate 196.

This sequence belongs to the methyltransferase superfamily. LCMT family.

The catalysed reaction is [phosphatase 2A protein]-C-terminal L-leucine + S-adenosyl-L-methionine = [phosphatase 2A protein]-C-terminal L-leucine methyl ester + S-adenosyl-L-homocysteine. Its function is as follows. Methylates the carboxyl group of the C-terminal leucine residue of protein phosphatase 2A catalytic subunits to form alpha-leucine ester residues. This chain is Leucine carboxyl methyltransferase 1 (LCMT1), found in Bos taurus (Bovine).